The following is a 215-amino-acid chain: Pyrrolidone-carboxylate peptidase (215 aa).

Active-site residues include Glu80, Cys143, and His167.

Belongs to the peptidase C15 family. In terms of assembly, homotetramer.

Its subcellular location is the cytoplasm. It carries out the reaction Release of an N-terminal pyroglutamyl group from a polypeptide, the second amino acid generally not being Pro.. Functionally, removes 5-oxoproline from various penultimate amino acid residues except L-proline. The protein is Pyrrolidone-carboxylate peptidase of Bacillus cereus (strain ZK / E33L).